The chain runs to 391 residues: 1-deoxy-D-xylulose 5-phosphate reductoisomerase (391 aa).

The NADPH site is built by Thr-11, Gly-12, Ser-13, Ile-14, Gly-37, Asn-39, and Asn-125. Lys-126 lines the 1-deoxy-D-xylulose 5-phosphate pocket. Position 127 (Glu-127) interacts with NADPH. Asp-151 is a Mn(2+) binding site. The 1-deoxy-D-xylulose 5-phosphate site is built by Ser-152, Glu-153, Ser-176, and His-199. Glu-153 contributes to the Mn(2+) binding site. Gly-205 provides a ligand contact to NADPH. Positions 212, 217, 218, and 221 each coordinate 1-deoxy-D-xylulose 5-phosphate. A Mn(2+)-binding site is contributed by Glu-221.

This sequence belongs to the DXR family. Mg(2+) is required as a cofactor. It depends on Mn(2+) as a cofactor.

The catalysed reaction is 2-C-methyl-D-erythritol 4-phosphate + NADP(+) = 1-deoxy-D-xylulose 5-phosphate + NADPH + H(+). It functions in the pathway isoprenoid biosynthesis; isopentenyl diphosphate biosynthesis via DXP pathway; isopentenyl diphosphate from 1-deoxy-D-xylulose 5-phosphate: step 1/6. Catalyzes the NADPH-dependent rearrangement and reduction of 1-deoxy-D-xylulose-5-phosphate (DXP) to 2-C-methyl-D-erythritol 4-phosphate (MEP). The polypeptide is 1-deoxy-D-xylulose 5-phosphate reductoisomerase (Heliobacterium modesticaldum (strain ATCC 51547 / Ice1)).